The chain runs to 431 residues: Enolase (431 aa).

Residue Q166 participates in (2R)-2-phosphoglycerate binding. Catalysis depends on E208, which acts as the Proton donor. Residues D245, E288, and D315 each contribute to the Mg(2+) site. (2R)-2-phosphoglycerate is bound by residues K340, R369, S370, and K391. The Proton acceptor role is filled by K340.

The protein belongs to the enolase family. Requires Mg(2+) as cofactor.

The protein localises to the cytoplasm. Its subcellular location is the secreted. It localises to the cell surface. The catalysed reaction is (2R)-2-phosphoglycerate = phosphoenolpyruvate + H2O. It participates in carbohydrate degradation; glycolysis; pyruvate from D-glyceraldehyde 3-phosphate: step 4/5. Its function is as follows. Catalyzes the reversible conversion of 2-phosphoglycerate (2-PG) into phosphoenolpyruvate (PEP). It is essential for the degradation of carbohydrates via glycolysis. The polypeptide is Enolase (Clostridium botulinum (strain Okra / Type B1)).